Here is a 623-residue protein sequence, read N- to C-terminus: mRNA-capping enzyme (623 aa).

The tract at residues 13–224 is TPase; it reads MGLPDRWLHC…IDNGRPSTSQ (212 aa). The 153-residue stretch at 44–196 folds into the Tyrosine-protein phosphatase domain; the sequence is YDNQIAERRY…YDPTEDDKIL (153 aa). The active-site Phosphocysteine intermediate is the cysteine 136. Residues 213–229 are compositionally biased toward polar residues; the sequence is TQIDNGRPSTSQQIPAT. The interval 213–243 is disordered; sequence TQIDNGRPSTSQQIPATNGNNNQNGNQLSGG. Positions 230–239 are enriched in low complexity; it reads NGNNNQNGNQ. Positions 241–585 are GTase; it reads SGGGDNSKLF…NPVTETYLIE (345 aa). The active-site N6-GMP-lysine intermediate is lysine 311. GTP-binding positions include arginine 316, arginine 331, 357 to 359, 477 to 479, and 553 to 558; these read DTE, KWK, and RERTDK. The disordered stretch occupies residues 603-623; sequence HHQIHQQQLHEGEPEARRQKL. The segment covering 610–623 has biased composition (basic and acidic residues); that stretch reads QLHEGEPEARRQKL.

The protein in the N-terminal section; belongs to the non-receptor class of the protein-tyrosine phosphatase family. This sequence in the C-terminal section; belongs to the eukaryotic GTase family.

It localises to the nucleus. The catalysed reaction is a 5'-end triphospho-ribonucleoside in mRNA + H2O = a 5'-end diphospho-ribonucleoside in mRNA + phosphate + H(+). It catalyses the reaction a 5'-end diphospho-ribonucleoside in mRNA + GTP + H(+) = a 5'-end (5'-triphosphoguanosine)-ribonucleoside in mRNA + diphosphate. Its activity is regulated as follows. RNA triphosphatase activity is inhibited by magnesium. Functionally, bifunctional mRNA-capping enzyme exhibiting RNA 5'-triphosphate monophosphatase activity in the N-terminal part and mRNA guanylyltransferase activity in the C-terminal part. Catalyzes the first two steps of cap formation: by removing the gamma-phosphate from the 5'-triphosphate end of nascent mRNA to yield a diphosphate end, and by transferring the GMP moiety of GTP to the 5'-diphosphate terminus via a covalent enzyme-GMP reaction intermediate. The chain is mRNA-capping enzyme (cel-1) from Caenorhabditis elegans.